A 144-amino-acid chain; its full sequence is VSANDIKNVQDTWGKLYDQWDAVHASKFYNKLFKDSEDISEAFVKAGTGSGIAMKRQALVFGAILQEFVANLNDPTALTLKIKGLCATHKTRGITNMELFAFALADLVAYMGTTISFTAAQKASWTAVNDVILHQMSSYFATVA.

One can recognise a Globin domain in the interval 1 to 141; sequence VSANDIKNVQ…ILHQMSSYFA (141 aa). His89 is a heme b binding site.

This sequence belongs to the globin family. In terms of assembly, homodimer.

This Phreagena soyoae (Deep-sea cold-seep clam) protein is Globin-1.